A 536-amino-acid polypeptide reads, in one-letter code: Testis-specific expressed protein 55 (536 aa).

A compositionally biased stretch (low complexity) spans 1–11 (MEEPPQEALAE). Disordered regions lie at residues 1-287 (MEEP…PGTS) and 328-348 (SNAD…QTDH). A compositionally biased stretch (basic and acidic residues) spans 35–52 (QKNQAERKADNHTAHRIA). 2 stretches are compositionally biased toward polar residues: residues 62–85 (QAES…STPG) and 105–136 (QVNQ…QVSG). 2 stretches are compositionally biased toward basic and acidic residues: residues 138–158 (TEER…ERRT) and 173–222 (RGSR…ERRP). A compositionally biased stretch (low complexity) spans 226-242 (IDSGSSVPSDQSPSVQI). Residues 243–255 (DSGSSVPSDQRPS) are compositionally biased toward polar residues. The span at 339–348 (HYTESDQTDH) shows a compositional bias: basic and acidic residues.

As to expression, testis-specific.

It is found in the nucleus. Its subcellular location is the cell projection. It localises to the cilium. The protein localises to the flagellum. The protein is Testis-specific expressed protein 55 of Homo sapiens (Human).